Reading from the N-terminus, the 115-residue chain is T cell receptor beta variable 2 (115 aa).

A signal peptide spans 1 to 19 (MDTWLVCWAIFSLLKAGLT). The region spanning 21–115 (PEVTQTPSHQ…SAMYFCASSE (95 aa)) is the Ig-like domain. Cys42 and Cys111 are oxidised to a cystine. Asn93 is a glycosylation site (N-linked (GlcNAc...) asparagine).

As to quaternary structure, alpha-beta TR is a heterodimer composed of an alpha and beta chain; disulfide-linked. The alpha-beta TR is associated with the transmembrane signaling CD3 coreceptor proteins to form the TR-CD3 (TcR or TCR). The assembly of alpha-beta TR heterodimers with CD3 occurs in the endoplasmic reticulum where a single alpha-beta TR heterodimer associates with one CD3D-CD3E heterodimer, one CD3G-CD3E heterodimer and one CD247 homodimer forming a stable octameric structure. CD3D-CD3E and CD3G-CD3E heterodimers preferentially associate with TR alpha and TR beta chains, respectively. The association of the CD247 homodimer is the last step of TcR assembly in the endoplasmic reticulum and is required for transport to the cell surface.

Its subcellular location is the cell membrane. Its function is as follows. V region of the variable domain of T cell receptor (TR) beta chain that participates in the antigen recognition. Alpha-beta T cell receptors are antigen specific receptors which are essential to the immune response and are present on the cell surface of T lymphocytes. Recognize peptide-major histocompatibility (MH) (pMH) complexes that are displayed by antigen presenting cells (APC), a prerequisite for efficient T cell adaptive immunity against pathogens. Binding of alpha-beta TR to pMH complex initiates TR-CD3 clustering on the cell surface and intracellular activation of LCK that phosphorylates the ITAM motifs of CD3G, CD3D, CD3E and CD247 enabling the recruitment of ZAP70. In turn ZAP70 phosphorylates LAT, which recruits numerous signaling molecules to form the LAT signalosome. The LAT signalosome propagates signal branching to three major signaling pathways, the calcium, the mitogen-activated protein kinase (MAPK) kinase and the nuclear factor NF-kappa-B (NF-kB) pathways, leading to the mobilization of transcription factors that are critical for gene expression and essential for T cell growth and differentiation. The T cell repertoire is generated in the thymus, by V-(D)-J rearrangement. This repertoire is then shaped by intrathymic selection events to generate a peripheral T cell pool of self-MH restricted, non-autoaggressive T cells. Post-thymic interaction of alpha-beta TR with the pMH complexes shapes TR structural and functional avidity. The protein is T cell receptor beta variable 2 of Homo sapiens (Human).